Here is a 344-residue protein sequence, read N- to C-terminus: 4-dimethylallyltryptophan N-methyltransferase easF (344 aa).

The protein belongs to the methyltransferase superfamily. In terms of assembly, homodimer.

The enzyme catalyses 4-(3-methylbut-2-enyl)-L-tryptophan + S-adenosyl-L-methionine = 4-(3-methylbut-2-enyl)-L-abrine + S-adenosyl-L-homocysteine + H(+). It participates in alkaloid biosynthesis; ergot alkaloid biosynthesis. Its function is as follows. 4-dimethylallyltryptophan N-methyltransferase; part of the gene cluster that mediates the biosynthesis of fungal ergot alkaloid ergovaline, the predominant ergopeptine product in E.festucae var. lolii. DmaW catalyzes the first step of ergot alkaloid biosynthesis by condensing dimethylallyl diphosphate (DMAP) and tryptophan to form 4-dimethylallyl-L-tryptophan. The second step is catalyzed by the methyltransferase easF that methylates 4-dimethylallyl-L-tryptophan in the presence of S-adenosyl-L-methionine, resulting in the formation of 4-dimethylallyl-L-abrine. The catalase easC and the FAD-dependent oxidoreductase easE then transform 4-dimethylallyl-L-abrine to chanoclavine-I which is further oxidized by easD in the presence of NAD(+), resulting in the formation of chanoclavine-I aldehyde. Agroclavine dehydrogenase easG then mediates the conversion of chanoclavine-I aldehyde to agroclavine via a non-enzymatic adduct reaction: the substrate is an iminium intermediate that is formed spontaneously from chanoclavine-I aldehyde in the presence of glutathione. The presence of easA is not required to complete this reaction. Further conversion of agroclavine to paspalic acid is a two-step process involving oxidation of agroclavine to elymoclavine and of elymoclavine to paspalic acid, the second step being performed by the elymoclavine oxidase cloA. Paspalic acid is then further converted to D-lysergic acid. Ergovaline is assembled from D-lysergic acid and three different amino acids by the D-lysergyl-peptide-synthetase composed of a monomudular (lpsB) and a trimodular (lpsA) nonribosomal peptide synthetase subunit. The sequence is that of 4-dimethylallyltryptophan N-methyltransferase easF from Epichloe festucae var. lolii (Neotyphodium lolii).